We begin with the raw amino-acid sequence, 859 residues long: Valine--tRNA ligase (859 aa).

The 'HIGH' region signature appears at 46–56 (PTVSGQLHIGH). The 'KMSKS' region motif lies at 583–587 (KMSKS). Lysine 586 contacts ATP.

This sequence belongs to the class-I aminoacyl-tRNA synthetase family. ValS type 2 subfamily. In terms of assembly, monomer.

The protein resides in the cytoplasm. The catalysed reaction is tRNA(Val) + L-valine + ATP = L-valyl-tRNA(Val) + AMP + diphosphate. In terms of biological role, catalyzes the attachment of valine to tRNA(Val). As ValRS can inadvertently accommodate and process structurally similar amino acids such as threonine, to avoid such errors, it has a 'posttransfer' editing activity that hydrolyzes mischarged Thr-tRNA(Val) in a tRNA-dependent manner. This chain is Valine--tRNA ligase, found in Rickettsia felis (strain ATCC VR-1525 / URRWXCal2) (Rickettsia azadi).